The primary structure comprises 1470 residues: Guanine nucleotide exchange factor subunit R06F6.8 (1470 aa).

WD repeat units follow at residues 20–58 (STAA…LLCS), 68–107 (ETRG…DEQC), and 472–512 (AYCS…VVGV). Disordered stretches follow at residues 673–710 (QSQN…PMNQ), 975–1001 (FFRT…ADSS), 1017–1045 (RLNK…SKDK), and 1238–1259 (RSPS…SPSS). Residues 689 to 707 (SNVSIQSVSTSTTSEPSSP) show a composition bias toward low complexity. Polar residues predominate over residues 983–1001 (AKTSLSRRPTVSSPSADSS). Basic and acidic residues predominate over residues 1028–1045 (EQKDAPRKDSIGGSSKDK). Residues 1294–1314 (LLLSLFSQTATIDWIFLFCLL) traverse the membrane as a helical segment. The span at 1385–1403 (SPDNENRKASQKTSADDPK) shows a compositional bias: basic and acidic residues. A disordered region spans residues 1385 to 1447 (SPDNENRKAS…SADRAHKSVK (63 aa)). Polar residues predominate over residues 1411-1424 (SGSSKLNNSFSNPK). The span at 1431 to 1447 (GRRERSRSADRAHKSVK) shows a compositional bias: basic and acidic residues.

This sequence belongs to the RIC1 family. As to quaternary structure, component of a guanine nucleotide exchange factor (GEF) complex.

The protein localises to the membrane. Probable component of a guanine nucleotide exchange factor (GEF) that may be required for efficient fusion of endosome-derived vesicles with the Golgi. The chain is Guanine nucleotide exchange factor subunit R06F6.8 from Caenorhabditis elegans.